The sequence spans 133 residues: Small ribosomal subunit protein uS8 (133 aa).

The protein belongs to the universal ribosomal protein uS8 family. In terms of assembly, part of the 30S ribosomal subunit. Contacts proteins S5 and S12.

Functionally, one of the primary rRNA binding proteins, it binds directly to 16S rRNA central domain where it helps coordinate assembly of the platform of the 30S subunit. The sequence is that of Small ribosomal subunit protein uS8 from Prochlorococcus marinus (strain MIT 9303).